Reading from the N-terminus, the 453-residue chain is Chromosomal replication initiator protein DnaA (453 aa).

A domain I, interacts with DnaA modulators region spans residues 1–73 (MNISPQYLWN…AQEVASVVGY (73 aa)). The segment at 73-112 (YPVDIQLTTAEGETMAMTGEAQSYQEKSLTQIAPESPKLN) is domain II. The tract at residues 113–329 (QLNPRYTFSR…GALIRAIAYT (217 aa)) is domain III, AAA+ region. ATP-binding residues include Gly-157, Gly-159, Lys-160, and Thr-161. The tract at residues 330-453 (SISGLSMTVQ…RINMASRTQS (124 aa)) is domain IV, binds dsDNA.

The protein belongs to the DnaA family. Oligomerizes as a right-handed, spiral filament on DNA at oriC.

Its subcellular location is the cytoplasm. Plays an essential role in the initiation and regulation of chromosomal replication. ATP-DnaA binds to the origin of replication (oriC) to initiate formation of the DNA replication initiation complex once per cell cycle. Binds the DnaA box (a 9 base pair repeat at the origin) and separates the double-stranded (ds)DNA. Forms a right-handed helical filament on oriC DNA; dsDNA binds to the exterior of the filament while single-stranded (ss)DNA is stabiized in the filament's interior. The ATP-DnaA-oriC complex binds and stabilizes one strand of the AT-rich DNA unwinding element (DUE), permitting loading of DNA polymerase. After initiation quickly degrades to an ADP-DnaA complex that is not apt for DNA replication. Binds acidic phospholipids. The chain is Chromosomal replication initiator protein DnaA from Rippkaea orientalis (strain PCC 8801 / RF-1) (Cyanothece sp. (strain PCC 8801)).